Reading from the N-terminus, the 632-residue chain is tRNA uridine 5-carboxymethylaminomethyl modification enzyme MnmG (632 aa).

Residues 15–20, Val127, and Ser182 each bind FAD; that span reads GAGHAG. A disordered region spans residues 203 to 226; the sequence is TPPRVKSSTIDYSKTEEQPGDDHP. The span at 215 to 226 shows a compositional bias: basic and acidic residues; sequence SKTEEQPGDDHP. NAD(+) is bound at residue 274–288; it reads GARYCPSIEDKIVRF. Gln371 contributes to the FAD binding site.

Belongs to the MnmG family. In terms of assembly, homodimer. Heterotetramer of two MnmE and two MnmG subunits. FAD is required as a cofactor.

It localises to the cytoplasm. Its function is as follows. NAD-binding protein involved in the addition of a carboxymethylaminomethyl (cmnm) group at the wobble position (U34) of certain tRNAs, forming tRNA-cmnm(5)s(2)U34. The chain is tRNA uridine 5-carboxymethylaminomethyl modification enzyme MnmG from Listeria monocytogenes serotype 4b (strain F2365).